The chain runs to 84 residues: MSILSFLLGEKKKSASVAKERLQLIIAHERVGGRPPADYLPALQKELVAVISKYVQISNDDIRVSLERQDDLEVLEVKIEIPQA.

Belongs to the MinE family.

Its function is as follows. Prevents the cell division inhibition by proteins MinC and MinD at internal division sites while permitting inhibition at polar sites. This ensures cell division at the proper site by restricting the formation of a division septum at the midpoint of the long axis of the cell. The polypeptide is Cell division topological specificity factor (Burkholderia multivorans (strain ATCC 17616 / 249)).